Reading from the N-terminus, the 100-residue chain is uncharacterized protein (100 aa).

The next 2 membrane-spanning stretches (helical) occupy residues 17–37 (IIILTLLFILIMLIFRNSVSF) and 78–98 (MVDKTRLFIFLFFSFIITIPF).

The protein localises to the endoplasmic reticulum membrane. This is an uncharacterized protein from Saccharomyces cerevisiae (strain ATCC 204508 / S288c) (Baker's yeast).